A 266-amino-acid chain; its full sequence is Glutamate racemase (266 aa).

Substrate-binding positions include Asp9–Ser10 and Tyr41–Gly42. The Proton donor/acceptor role is filled by Cys72. Residue Asn73 to Thr74 coordinates substrate. Cys184 acts as the Proton donor/acceptor in catalysis. Thr185–His186 lines the substrate pocket.

Belongs to the aspartate/glutamate racemases family.

The catalysed reaction is L-glutamate = D-glutamate. It participates in cell wall biogenesis; peptidoglycan biosynthesis. Its function is as follows. Provides the (R)-glutamate required for cell wall biosynthesis. This is Glutamate racemase from Staphylococcus aureus (strain Mu3 / ATCC 700698).